The sequence spans 608 residues: Epsin-3 (608 aa).

6 residues coordinate a 1,2-diacyl-sn-glycero-3-phospho-(1D-myo-inositol-4,5-bisphosphate): arginine 8, lysine 11, arginine 25, asparagine 30, arginine 63, and histidine 73. An ENTH domain is found at 12 to 144 (NIVHNYSEAE…KDEERLRQER (133 aa)). 2 disordered regions span residues 150 to 266 (TKER…QSSI) and 281 to 475 (STHC…GPSA). A compositionally biased stretch (low complexity) spans 174 to 189 (GSPSSYTSASSSPRYA). Phosphoserine occurs at positions 184 and 185. Residues 202 to 221 (EEELQLQLALAMSREEAEKG) form the UIM domain. Basic and acidic residues-rich tracts occupy residues 214–229 (SREE…KGDD) and 240–260 (GQRR…EKLK). Tandem repeats lie at residues 287-289 (DPW), 310-312 (DPW), 337-339 (EPW), 353-355 (DPW), 370-372 (DPW), 495-497 (NPF), and 508-510 (NPF). A 5 X 3 AA repeats of [DE]-P-W region spans residues 287–372 (DPWDIPGLRP…KLPSTGVDPW (86 aa)). Over residues 346 to 363 (PSGPPITDPWAPSSPTPK) the composition is skewed to pro residues. A 3 X 3 AA repeats of N-P-F region spans residues 495-607 (NPFLTGLSAP…LPPQAGTNPF (113 aa)). 2 disordered regions span residues 498 to 530 (LTGL…SPAL) and 575 to 608 (GAFA…NPFL). The span at 578–588 (APPPASLPQPL) shows a compositional bias: pro residues. Copy 3 of the repeat occupies 605 to 607 (NPF).

The protein belongs to the epsin family.

Its subcellular location is the cytoplasm. It localises to the cell cortex. It is found in the perinuclear region. The protein resides in the cytoplasmic vesicle. The protein localises to the clathrin-coated vesicle. Its subcellular location is the nucleus. The protein is Epsin-3 (Epn3) of Rattus norvegicus (Rat).